Consider the following 516-residue polypeptide: Putative F-box and FNIP repeat-containing protein L414 (516 aa).

The F-box domain occupies 4 to 49 (INDLNMDVILHLLTFLTDKNKLNFMMTCTHLYQFISCVKYNNFQLF). 5 FNIP repeats span residues 123 to 165 (FNHT…FGEN), 166 to 208 (FNKM…LMYS), 341 to 383 (YNPK…NFNG), 385 to 428 (YDNI…FGKL), and 429 to 470 (YNKP…FGYM).

This Acanthamoeba polyphaga (Amoeba) protein is Putative F-box and FNIP repeat-containing protein L414.